The primary structure comprises 441 residues: Tubulin beta-1 chain (441 aa).

Residues Gln-11, Glu-69, Ser-138, Gly-142, Thr-143, Gly-144, Asn-204, and Asn-226 each coordinate GTP. Position 69 (Glu-69) interacts with Mg(2+).

This sequence belongs to the tubulin family. In terms of assembly, dimer of alpha and beta chains. A typical microtubule is a hollow water-filled tube with an outer diameter of 25 nm and an inner diameter of 15 nM. Alpha-beta heterodimers associate head-to-tail to form protofilaments running lengthwise along the microtubule wall with the beta-tubulin subunit facing the microtubule plus end conferring a structural polarity. Microtubules usually have 13 protofilaments but different protofilament numbers can be found in some organisms and specialized cells. It depends on Mg(2+) as a cofactor. As to expression, expressed primarily in touch receptor neurons.

Its subcellular location is the cytoplasm. The protein localises to the cytoskeleton. In terms of biological role, tubulin is the major constituent of microtubules, a cylinder consisting of laterally associated linear protofilaments composed of alpha- and beta-tubulin heterodimers. Microtubules grow by the addition of GTP-tubulin dimers to the microtubule end, where a stabilizing cap forms. Below the cap, tubulin dimers are in GDP-bound state, owing to GTPase activity of alpha-tubulin. Plays a role in mechanosensory transduction (touch sensitivity). Functionally, mec-7 beta-tubulin is required for the production of 15-protofilament microtubules. This Caenorhabditis briggsae protein is Tubulin beta-1 chain (mec-7).